The sequence spans 953 residues: TPR repeat-containing protein ZIP4 (953 aa).

One copy of the TPR 1 repeat lies at 129–162; that stretch reads ASFFHRSGLAWLDLGRVDLASACFEKATPLVSAA. Positions 248-269 are disordered; the sequence is AASPSSSSPRTPPYGGATPKTP. 2 TPR repeats span residues 432 to 465 and 473 to 506; these read HALL…VSRD and ADCF…EPNI. Residues 924–953 form a disordered region; it reads RVSGDEPDECSQEEAPKASISGSMSQPVLV. The segment covering 943 to 953 has biased composition (polar residues); it reads ISGSMSQPVLV.

The protein resides in the nucleus. It is found in the chromosome. Functionally, required for crossover formation, complete synapsis of homologous chromosomes and bivalent formation during meiosis. Is specific to recombination events resulting in interference-sensitive crossovers (class I meiotic crossover) and works cooperatively with MER3 to promote crossovers. This Oryza sativa subsp. indica (Rice) protein is TPR repeat-containing protein ZIP4.